We begin with the raw amino-acid sequence, 336 residues long: Tetraacyldisaccharide 4'-kinase (336 aa).

ATP is bound at residue 60 to 67 (TIGGTGKT).

The protein belongs to the LpxK family.

It catalyses the reaction a lipid A disaccharide + ATP = a lipid IVA + ADP + H(+). Its pathway is glycolipid biosynthesis; lipid IV(A) biosynthesis; lipid IV(A) from (3R)-3-hydroxytetradecanoyl-[acyl-carrier-protein] and UDP-N-acetyl-alpha-D-glucosamine: step 6/6. Transfers the gamma-phosphate of ATP to the 4'-position of a tetraacyldisaccharide 1-phosphate intermediate (termed DS-1-P) to form tetraacyldisaccharide 1,4'-bis-phosphate (lipid IVA). The sequence is that of Tetraacyldisaccharide 4'-kinase from Pseudomonas putida (strain W619).